We begin with the raw amino-acid sequence, 472 residues long: Cysteine--tRNA ligase (472 aa).

Cys-29 is a binding site for Zn(2+). Positions 31–41 match the 'HIGH' region motif; the sequence is PTVYDFAHIGN. Zn(2+)-binding residues include Cys-227, His-252, and Glu-256. The 'KMSKS' region signature appears at 285 to 289; sequence KMSKS. Residue Lys-288 participates in ATP binding.

The protein belongs to the class-I aminoacyl-tRNA synthetase family. In terms of assembly, monomer. The cofactor is Zn(2+).

The protein localises to the cytoplasm. The enzyme catalyses tRNA(Cys) + L-cysteine + ATP = L-cysteinyl-tRNA(Cys) + AMP + diphosphate. The protein is Cysteine--tRNA ligase of Bradyrhizobium sp. (strain BTAi1 / ATCC BAA-1182).